The primary structure comprises 179 residues: Replication restart protein DnaT (179 aa).

A disordered region spans residues 156–179 (GGLPKRDVNTVSEPDSQIPPGFRG).

The protein belongs to the DnaT family. Homooligomerizes. Interacts with PriB. Component of the replication restart primosome. Primosome assembly occurs via a 'hand-off' mechanism. PriA binds to replication forks, subsequently PriB then DnaT bind; DnaT then displaces ssDNA to generate the helicase loading substrate.

Functionally, involved in the restart of stalled replication forks, which reloads the replicative helicase on sites other than the origin of replication. Can function in multiple replication restart pathways. Displaces ssDNA from a PriB-ssDNA complex. Probably forms a spiral filament on ssDNA. In Escherichia coli (strain ATCC 8739 / DSM 1576 / NBRC 3972 / NCIMB 8545 / WDCM 00012 / Crooks), this protein is Replication restart protein DnaT.